A 565-amino-acid polypeptide reads, in one-letter code: Sulfite reductase [NADPH] hemoprotein beta-component (565 aa).

[4Fe-4S] cluster is bound by residues Cys-429, Cys-435, Cys-474, and Cys-478. Cys-478 is a binding site for siroheme.

The protein belongs to the nitrite and sulfite reductase 4Fe-4S domain family. In terms of assembly, alpha(8)-beta(8). The alpha component is a flavoprotein, the beta component is a hemoprotein. Siroheme serves as cofactor. [4Fe-4S] cluster is required as a cofactor.

It catalyses the reaction hydrogen sulfide + 3 NADP(+) + 3 H2O = sulfite + 3 NADPH + 4 H(+). Its pathway is sulfur metabolism; hydrogen sulfide biosynthesis; hydrogen sulfide from sulfite (NADPH route): step 1/1. Its function is as follows. Component of the sulfite reductase complex that catalyzes the 6-electron reduction of sulfite to sulfide. This is one of several activities required for the biosynthesis of L-cysteine from sulfate. The polypeptide is Sulfite reductase [NADPH] hemoprotein beta-component (Shewanella putrefaciens (strain CN-32 / ATCC BAA-453)).